The chain runs to 406 residues: Probable cysteine desulfurase (406 aa).

An N6-(pyridoxal phosphate)lysine modification is found at K224. C361 (cysteine persulfide intermediate) is an active-site residue.

This sequence belongs to the class-V pyridoxal-phosphate-dependent aminotransferase family. Csd subfamily. Pyridoxal 5'-phosphate serves as cofactor.

The enzyme catalyses (sulfur carrier)-H + L-cysteine = (sulfur carrier)-SH + L-alanine. Catalyzes the removal of elemental sulfur and selenium atoms from L-cysteine, L-cystine, L-selenocysteine, and L-selenocystine to produce L-alanine. This chain is Probable cysteine desulfurase (csd), found in Halalkalibacterium halodurans (strain ATCC BAA-125 / DSM 18197 / FERM 7344 / JCM 9153 / C-125) (Bacillus halodurans).